The following is a 407-amino-acid chain: MGNNVFDVLKERGYIKQTTHEEEIRDLINKDKITFYIGFDPTADSLHIGHFLPLMMMAHMQKAGHRPIALVGGGTVRIGDPSGKSEMRKMLSKEAIDKNVSSIKSQISRFIDFSDDKAILVDNADWLLNLNYLEFIREIGVHFSVNKMLTAECFKQRLEKGLSFLEFNYMLMQAYDFLCLNRKYGCVMELGGDDQWSNMLAGTDLIRREESKSAYAMTCTLLTNSEGNKMGKTVNGALWLDKDKTSPYEFYQYWRNVDDADVEKCLALLTFLPMDEVRRLAALEGNKINEAKKVLAYEVTKLIHGEDEAKKAEEASEALFGAGKDMSNVPTVNISKDDLGKGILDILVETKILPSKGEARRLIQQGGLSINEEKVTDINMAVTEDLFEENSIIIRRGKKSYNRIVIE.

Tyr36 contacts L-tyrosine. The 'HIGH' region motif lies at 41-50; the sequence is PTADSLHIGH. L-tyrosine contacts are provided by Tyr169 and Gln173. The short motif at 229–233 is the 'KMSKS' region element; the sequence is KMGKT. Lys232 is a binding site for ATP. The S4 RNA-binding domain occupies 341 to 407; the sequence is KGILDILVET…KKSYNRIVIE (67 aa).

It belongs to the class-I aminoacyl-tRNA synthetase family. TyrS type 1 subfamily. Homodimer.

It is found in the cytoplasm. The enzyme catalyses tRNA(Tyr) + L-tyrosine + ATP = L-tyrosyl-tRNA(Tyr) + AMP + diphosphate + H(+). Catalyzes the attachment of tyrosine to tRNA(Tyr) in a two-step reaction: tyrosine is first activated by ATP to form Tyr-AMP and then transferred to the acceptor end of tRNA(Tyr). The protein is Tyrosine--tRNA ligase of Clostridium tetani (strain Massachusetts / E88).